Here is a 238-residue protein sequence, read N- to C-terminus: Insulin-like growth factor-binding protein 6 (238 aa).

A signal peptide spans 1 to 25 (MTWDGLPTQPLLMLLMLLFAAGSGS). The region spanning 26–108 (ALAGCPGCGA…LIGQGRCQRA (83 aa)) is the IGFBP N-terminal domain. Cystine bridges form between C30/C33, C41/C45, C58/C64, C72/C85, and C79/C105. The segment at 104–159 (RCQRARGPSEETTKESKPQGGASRSRDTNHRDRQKNPRTSAAPIRPNPVQDSEMGP) is disordered. 2 stretches are compositionally biased toward basic and acidic residues: residues 110–120 (GPSEETTKESK) and 127–138 (RSRDTNHRDRQK). The 76-residue stretch at 157 to 232 (MGPCRRHLDS…SPDGQGSTQC (76 aa)) folds into the Thyroglobulin type-1 domain. Intrachain disulfides connect C160-C188, C199-C210, and C212-C232. Residues 218-238 (QPLPVSPDGQGSTQCSARSSG) are disordered. Residues 226-238 (GQGSTQCSARSSG) show a composition bias toward polar residues.

Interacts (via C-terminal domain) with PHB2. O-glycosylated.

The protein localises to the secreted. Functionally, IGF-binding proteins prolong the half-life of the IGFs and have been shown to either inhibit or stimulate the growth promoting effects of the IGFs on cell culture. They alter the interaction of IGFs with their cell surface receptors. Activates the MAPK signaling pathway and induces cell migration. The chain is Insulin-like growth factor-binding protein 6 (Igfbp6) from Mus musculus (Mouse).